The chain runs to 186 residues: MSVADIKKSAEQKMQKSIDAFKADLAKVRTGRAHTGLLDHVQVDYYGSMVPISQVANLGLADARTISVQPWEKKMVSAVERAIRDADLGLNPATMGEVIRVPMPPLTEERRKELTKVVKSEGEDAKVAVRNVRRDANEQFKKLVKDKAISEDDERRGQDEVQKLTDRFVAEVDKLVAEKDKEIMTV.

Belongs to the RRF family.

Its subcellular location is the cytoplasm. Functionally, responsible for the release of ribosomes from messenger RNA at the termination of protein biosynthesis. May increase the efficiency of translation by recycling ribosomes from one round of translation to another. This is Ribosome-recycling factor from Ralstonia nicotianae (strain ATCC BAA-1114 / GMI1000) (Ralstonia solanacearum).